A 78-amino-acid polypeptide reads, in one-letter code: Ferredoxin oxidoreductase 2 subunit ForD (78 aa).

2 consecutive 4Fe-4S ferredoxin-type domains span residues Phe-3 to Ser-35 and Asn-37 to Glu-66. Cys-12, Cys-17, Cys-20, Cys-24, Cys-46, Cys-49, Cys-52, and Cys-56 together coordinate [4Fe-4S] cluster.

Heterotetramer of one alpha, one beta, one delta and one gamma chain. It depends on [4Fe-4S] cluster as a cofactor.

The protein is Ferredoxin oxidoreductase 2 subunit ForD (forD2) of Aquifex aeolicus (strain VF5).